We begin with the raw amino-acid sequence, 330 residues long: MATH domain and coiled-coil domain-containing protein At3g58210 (330 aa).

In terms of domain architecture, MATH spans 6–133; sequence DNKFTWVIQN…NDELKIVAEV (128 aa). Residues 263 to 314 are a coiled coil; sequence FKVDWLEKKLEEVKKKKEEEQTGEARIQELEEELKEFKQKCLDREAMLEKEK.

This chain is MATH domain and coiled-coil domain-containing protein At3g58210, found in Arabidopsis thaliana (Mouse-ear cress).